The chain runs to 310 residues: Nuclear hormone receptor family member nhr-89 (310 aa).

A DNA-binding region (nuclear receptor) is located at residues 5 to 79 (EGPCRVCHSV…SGMRRDCVRK (75 aa)). 2 NR C4-type zinc fingers span residues 8 to 29 (CRVC…CMSC) and 43 to 67 (CPAN…YNKC). Positions 101–310 (KLSESYEELL…TLHQKYQIPF (210 aa)) constitute an NR LBD domain.

This sequence belongs to the nuclear hormone receptor family.

The protein localises to the nucleus. Orphan nuclear receptor. This is Nuclear hormone receptor family member nhr-89 (nhr-89) from Caenorhabditis elegans.